We begin with the raw amino-acid sequence, 382 residues long: ATP phosphoribosyltransferase regulatory subunit (382 aa).

Belongs to the class-II aminoacyl-tRNA synthetase family. HisZ subfamily. Heteromultimer composed of HisG and HisZ subunits.

It is found in the cytoplasm. It participates in amino-acid biosynthesis; L-histidine biosynthesis; L-histidine from 5-phospho-alpha-D-ribose 1-diphosphate: step 1/9. Required for the first step of histidine biosynthesis. May allow the feedback regulation of ATP phosphoribosyltransferase activity by histidine. This chain is ATP phosphoribosyltransferase regulatory subunit, found in Burkholderia multivorans (strain ATCC 17616 / 249).